The following is a 188-amino-acid chain: Elongation factor P (188 aa).

It belongs to the elongation factor P family.

It localises to the cytoplasm. The protein operates within protein biosynthesis; polypeptide chain elongation. Involved in peptide bond synthesis. Stimulates efficient translation and peptide-bond synthesis on native or reconstituted 70S ribosomes in vitro. Probably functions indirectly by altering the affinity of the ribosome for aminoacyl-tRNA, thus increasing their reactivity as acceptors for peptidyl transferase. This chain is Elongation factor P, found in Christiangramia forsetii (strain DSM 17595 / CGMCC 1.15422 / KT0803) (Gramella forsetii).